Here is a 381-residue protein sequence, read N- to C-terminus: Acetylornithine deacetylase (381 aa).

H79 serves as a coordination point for Zn(2+). D81 is an active-site residue. D111 is a Zn(2+) binding site. E143 is an active-site residue. Zn(2+) is bound by residues E144, E168, and H354.

The protein belongs to the peptidase M20A family. ArgE subfamily. Homodimer. The cofactor is Zn(2+). Co(2+) serves as cofactor. Glutathione is required as a cofactor.

It localises to the cytoplasm. The enzyme catalyses N(2)-acetyl-L-ornithine + H2O = L-ornithine + acetate. Its pathway is amino-acid biosynthesis; L-arginine biosynthesis; L-ornithine from N(2)-acetyl-L-ornithine (linear): step 1/1. Functionally, catalyzes the hydrolysis of the amide bond of N(2)-acetylated L-amino acids. Cleaves the acetyl group from N-acetyl-L-ornithine to form L-ornithine, an intermediate in L-arginine biosynthesis pathway, and a branchpoint in the synthesis of polyamines. The sequence is that of Acetylornithine deacetylase from Buchnera aphidicola subsp. Acyrthosiphon pisum (strain Tuc7).